The primary structure comprises 265 residues: Cytochrome c oxidase subunit 3 (265 aa).

Helical transmembrane passes span 16 to 36 (PWPISGSLGALATTVGGVMYM), 41 to 61 (GGATLLSLGLIFLLYTMFVWW), 84 to 104 (YGSILFIVSEVMFLFAFFWAS), 137 to 157 (TPILLSSGAAVTWAHHAILAG), 162 to 182 (AVYALVATVSLAIVFTGFQGM), 200 to 220 (FYLATGFHGFHVIIGTLFSII), and 245 to 265 (WHFVDVVRLFLFVSIYWWGGI).

The protein belongs to the cytochrome c oxidase subunit 3 family. In terms of assembly, component of the cytochrome c oxidase (complex IV, CIV), a multisubunit enzyme composed of a catalytic core of 3 subunits and several supernumerary subunits. The complex exists as a monomer or a dimer and forms supercomplexes (SCs) in the inner mitochondrial membrane with ubiquinol-cytochrome c oxidoreductase (cytochrome b-c1 complex, complex III, CIII).

The protein localises to the mitochondrion inner membrane. It carries out the reaction 4 Fe(II)-[cytochrome c] + O2 + 8 H(+)(in) = 4 Fe(III)-[cytochrome c] + 2 H2O + 4 H(+)(out). Functionally, component of the cytochrome c oxidase, the last enzyme in the mitochondrial electron transport chain which drives oxidative phosphorylation. The respiratory chain contains 3 multisubunit complexes succinate dehydrogenase (complex II, CII), ubiquinol-cytochrome c oxidoreductase (cytochrome b-c1 complex, complex III, CIII) and cytochrome c oxidase (complex IV, CIV), that cooperate to transfer electrons derived from NADH and succinate to molecular oxygen, creating an electrochemical gradient over the inner membrane that drives transmembrane transport and the ATP synthase. Cytochrome c oxidase is the component of the respiratory chain that catalyzes the reduction of oxygen to water. Electrons originating from reduced cytochrome c in the intermembrane space (IMS) are transferred via the dinuclear copper A center (CU(A)) of subunit 2 and heme A of subunit 1 to the active site in subunit 1, a binuclear center (BNC) formed by heme A3 and copper B (CU(B)). The BNC reduces molecular oxygen to 2 water molecules using 4 electrons from cytochrome c in the IMS and 4 protons from the mitochondrial matrix. This Oenothera berteroana (Bertero's evening primrose) protein is Cytochrome c oxidase subunit 3 (COX3).